Reading from the N-terminus, the 665-residue chain is Dystrophia myotonica WD repeat-containing protein (665 aa).

The span at 1-11 (MAAGGAEGGPG) shows a compositional bias: gly residues. 2 disordered regions span residues 1–91 (MAAG…PALP) and 100–119 (LGDP…LGAG). N-acetylalanine is present on Ala-2. Pro residues predominate over residues 52–64 (PAPPQPTQPPPGP). Residues 65–76 (AAASGPGAAGPA) show a composition bias toward low complexity. Residues 77-89 (SSPPPAGPGPGPA) show a composition bias toward pro residues. 4 WD repeats span residues 208 to 248 (IDKT…TSTP), 279 to 318 (VGEG…LRGL), 321 to 360 (SYFG…VVAR), and 363 to 445 (GHKS…LSPH). Disordered stretches follow at residues 380 to 413 (AEEA…VSPL), 446 to 506 (PSLA…SMEP), 524 to 564 (RDRG…RSRL), and 628 to 665 (DEET…GTVV). Low complexity predominate over residues 450-491 (RTRTLPGTPGATPPASGSSRAGETGAGPLPRSLSRSNSLPHP). Ser-487 bears the Phosphoserine mark. Position 543 is an omega-N-methylarginine (Arg-543). The WD 5 repeat unit spans residues 592 to 629 (IAQERLTVLLFLEDCIITACQEGLICTWARPGKAFTDE). Residues 634–646 (QAGQASWPRSPSK) show a composition bias toward polar residues. Low complexity predominate over residues 653–665 (SSQPGSSPSGTVV).

In terms of assembly, component of the USP12/DMWD/WDR48 deubiquitinating complex. Interacts with USP12; promotes its enzymatic activity. Interacts with USP46. In terms of tissue distribution, widely expressed in brain where it localizes to the olfactory bulb, forebrain, thalamus, hippocampus, cerebellum, cortex and hypothalamus (at protein level). Expression seems to be particularly strong in areas of high synaptic density such as the glomerular layer of the olfactory bulb, and mossy fiber terminal fields of the hippocampus (at protein level). Expressed in retina, with strongest expression in the external and internal plexiform layers (at protein level). Strongly expressed in brain and testis. Also detected at lower levels in heart, kidney, liver, lung, ovary, uterus, bladder and skeletal muscle. In testis, expression seems to be restricted to secondary spermatocytes.

The protein resides in the cytoplasm. The protein localises to the nucleus. Its subcellular location is the perikaryon. It localises to the cell projection. It is found in the dendrite. Functionally, regulator of the deubiquitinating USP12/DMWD/WDR48 complex. Functions as a cofactor that promotes USP12 enzymatic activity. The polypeptide is Dystrophia myotonica WD repeat-containing protein (Dmwd) (Mus musculus (Mouse)).